The primary structure comprises 163 residues: Cytochrome b6-f complex subunit 4 (163 aa).

The next 3 membrane-spanning stretches (helical) occupy residues 36 to 56, 95 to 115, and 131 to 151; these read LLYIFPVVILGTIACNVGLAV, LLGVLLMVSVPTGLLTVPFLE, and TVFLIGTAVALWLGIGATLPI.

Belongs to the cytochrome b family. PetD subfamily. The 4 large subunits of the cytochrome b6-f complex are cytochrome b6, subunit IV (17 kDa polypeptide, petD), cytochrome f and the Rieske protein, while the 4 small subunits are petG, petL, petM and petN. The complex functions as a dimer.

The protein localises to the plastid. It is found in the chloroplast thylakoid membrane. In terms of biological role, component of the cytochrome b6-f complex, which mediates electron transfer between photosystem II (PSII) and photosystem I (PSI), cyclic electron flow around PSI, and state transitions. This chain is Cytochrome b6-f complex subunit 4, found in Drimys granadensis.